The primary structure comprises 816 residues: S-layer protein (816 aa).

The first 29 residues, 1–29 (MAKTNSYKKVIAGTMTAAMVAGVVSPVAA), serve as a signal peptide directing secretion. 3 consecutive SLH domains span residues 30–93 (AGKS…DAKP), 94–150 (SFAD…KVNG), and 152–215 (PATK…VAKV). The 78-residue stretch at 403–480 (FTSKDFKQND…TVKDSKGKEL (78 aa)) folds into the BIG2 domain.

Its subcellular location is the secreted. The protein resides in the cell wall. It localises to the S-layer. Its function is as follows. The S-layer is a paracrystalline mono-layered assembly of proteins which coat the surface of bacteria. The polypeptide is S-layer protein (Bacillus thuringiensis subsp. finitimus).